Here is a 526-residue protein sequence, read N- to C-terminus: Bifunctional purine biosynthesis protein PurH (526 aa).

Residues 1–149 (MLHSLPIRRA…KNHEAVTVVV (149 aa)) enclose the MGS-like domain.

The protein belongs to the PurH family.

It catalyses the reaction (6R)-10-formyltetrahydrofolate + 5-amino-1-(5-phospho-beta-D-ribosyl)imidazole-4-carboxamide = 5-formamido-1-(5-phospho-D-ribosyl)imidazole-4-carboxamide + (6S)-5,6,7,8-tetrahydrofolate. The catalysed reaction is IMP + H2O = 5-formamido-1-(5-phospho-D-ribosyl)imidazole-4-carboxamide. It functions in the pathway purine metabolism; IMP biosynthesis via de novo pathway; 5-formamido-1-(5-phospho-D-ribosyl)imidazole-4-carboxamide from 5-amino-1-(5-phospho-D-ribosyl)imidazole-4-carboxamide (10-formyl THF route): step 1/1. The protein operates within purine metabolism; IMP biosynthesis via de novo pathway; IMP from 5-formamido-1-(5-phospho-D-ribosyl)imidazole-4-carboxamide: step 1/1. This chain is Bifunctional purine biosynthesis protein PurH, found in Rhodospirillum rubrum (strain ATCC 11170 / ATH 1.1.1 / DSM 467 / LMG 4362 / NCIMB 8255 / S1).